Here is a 274-residue protein sequence, read N- to C-terminus: 2,3,4,5-tetrahydropyridine-2,6-dicarboxylate N-succinyltransferase (274 aa).

2 residues coordinate substrate: R107 and D144.

The protein belongs to the transferase hexapeptide repeat family. Homotrimer.

The protein resides in the cytoplasm. It catalyses the reaction (S)-2,3,4,5-tetrahydrodipicolinate + succinyl-CoA + H2O = (S)-2-succinylamino-6-oxoheptanedioate + CoA. The protein operates within amino-acid biosynthesis; L-lysine biosynthesis via DAP pathway; LL-2,6-diaminopimelate from (S)-tetrahydrodipicolinate (succinylase route): step 1/3. This is 2,3,4,5-tetrahydropyridine-2,6-dicarboxylate N-succinyltransferase from Cereibacter sphaeroides (strain ATCC 17029 / ATH 2.4.9) (Rhodobacter sphaeroides).